Consider the following 122-residue polypeptide: Large ribosomal subunit protein uL18 (122 aa).

The segment at 1–24 (MLKKADKNANRLQRHKRVRRKISG) is disordered. Residues 12 to 22 (LQRHKRVRRKI) show a composition bias toward basic residues.

It belongs to the universal ribosomal protein uL18 family. As to quaternary structure, part of the 50S ribosomal subunit; part of the 5S rRNA/L5/L18/L25 subcomplex. Contacts the 5S and 23S rRNAs.

In terms of biological role, this is one of the proteins that bind and probably mediate the attachment of the 5S RNA into the large ribosomal subunit, where it forms part of the central protuberance. The sequence is that of Large ribosomal subunit protein uL18 from Clostridioides difficile (strain 630) (Peptoclostridium difficile).